We begin with the raw amino-acid sequence, 407 residues long: Steroid 3-ketoacyl-CoA thiolase FadA6 (407 aa).

Cysteine 110 acts as the Acyl-thioester intermediate in catalysis. CoA is bound by residues glutamine 178, 237-239 (RES), and serine 262. Catalysis depends on proton acceptor residues histidine 363 and cysteine 393. Glycine 395 serves as a coordination point for substrate.

This sequence belongs to the thiolase-like superfamily. Thiolase family.

It catalyses the reaction an acyl-CoA + acetyl-CoA = a 3-oxoacyl-CoA + CoA. The catalysed reaction is 6-methyl-3,7-dioxodecanedioyl-CoA + CoA = 4-methyl-5-oxo-octanedioyl-CoA + acetyl-CoA. It functions in the pathway steroid metabolism; cholesterol degradation. Its function is as follows. May be involved in the final steps of cholesterol and steroid degradation. Catalyzes the formation of 4-methyl-5-oxo-octanedioyl-CoA (MOODA-CoA) and acetyl-CoA from 6-methyl-3,7-dioxodecanedioyl-CoA (MeDODA-CoA) and coenzyme A. The polypeptide is Steroid 3-ketoacyl-CoA thiolase FadA6 (Mycobacterium tuberculosis (strain ATCC 25618 / H37Rv)).